A 214-amino-acid polypeptide reads, in one-letter code: Ribonuclease HII (214 aa).

One can recognise an RNase H type-2 domain in the interval 26–214; it reads EIVCGVDEAG…PVREAFDLIR (189 aa). Residues Asp-32, Glu-33, and Asp-124 each coordinate a divalent metal cation.

The protein belongs to the RNase HII family. Mn(2+) is required as a cofactor. It depends on Mg(2+) as a cofactor.

The protein resides in the cytoplasm. The catalysed reaction is Endonucleolytic cleavage to 5'-phosphomonoester.. Its function is as follows. Endonuclease that specifically degrades the RNA of RNA-DNA hybrids. The polypeptide is Ribonuclease HII (Burkholderia pseudomallei (strain 668)).